We begin with the raw amino-acid sequence, 82 residues long: MGAIAVLFIVFGFPIVAGVFGIAGHFLFKRFWVAPLIVLITSLILLVTLASGNSSFIFWVVMYTAIALVTSVATLFLRKFFE.

The next 3 membrane-spanning stretches (helical) occupy residues 4 to 26 (IAVLFIVFGFPIVAGVFGIAGHF), 31 to 50 (FWVAPLIVLITSLILLVTLA), and 55 to 77 (SFIFWVVMYTAIALVTSVATLFL).

It is found in the cell membrane. This is an uncharacterized protein from Bacillus subtilis (strain 168).